Reading from the N-terminus, the 305-residue chain is Ribonuclease BN (305 aa).

Zn(2+) contacts are provided by histidine 64, histidine 66, aspartate 68, histidine 69, histidine 141, aspartate 212, and histidine 270. Catalysis depends on aspartate 68, which acts as the Proton acceptor.

It belongs to the RNase Z family. RNase BN subfamily. Homodimer. The cofactor is Zn(2+).

Functionally, zinc phosphodiesterase, which has both exoribonuclease and endoribonuclease activities. In Escherichia coli O7:K1 (strain IAI39 / ExPEC), this protein is Ribonuclease BN.